The following is a 137-amino-acid chain: Large ribosomal subunit protein uL16 (137 aa).

The protein belongs to the universal ribosomal protein uL16 family. In terms of assembly, part of the 50S ribosomal subunit.

Functionally, binds 23S rRNA and is also seen to make contacts with the A and possibly P site tRNAs. This chain is Large ribosomal subunit protein uL16, found in Cereibacter sphaeroides (strain ATCC 17029 / ATH 2.4.9) (Rhodobacter sphaeroides).